A 414-amino-acid polypeptide reads, in one-letter code: Tryptophan synthase beta chain (414 aa).

A compositionally biased stretch (basic and acidic residues) spans 1–26 (MVSTFSRKDQNYKNDDLNQPSKEGRF). A disordered region spans residues 1-27 (MVSTFSRKDQNYKNDDLNQPSKEGRFG). Lys-109 is modified (N6-(pyridoxal phosphate)lysine).

This sequence belongs to the TrpB family. As to quaternary structure, tetramer of two alpha and two beta chains. The cofactor is pyridoxal 5'-phosphate.

It carries out the reaction (1S,2R)-1-C-(indol-3-yl)glycerol 3-phosphate + L-serine = D-glyceraldehyde 3-phosphate + L-tryptophan + H2O. It participates in amino-acid biosynthesis; L-tryptophan biosynthesis; L-tryptophan from chorismate: step 5/5. Functionally, the beta subunit is responsible for the synthesis of L-tryptophan from indole and L-serine. The polypeptide is Tryptophan synthase beta chain (Prochlorococcus marinus (strain MIT 9301)).